The primary structure comprises 327 residues: Phenylalanine--tRNA ligase alpha subunit (327 aa).

Glu252 provides a ligand contact to Mg(2+).

Belongs to the class-II aminoacyl-tRNA synthetase family. Phe-tRNA synthetase alpha subunit type 1 subfamily. In terms of assembly, tetramer of two alpha and two beta subunits. It depends on Mg(2+) as a cofactor.

The protein resides in the cytoplasm. The catalysed reaction is tRNA(Phe) + L-phenylalanine + ATP = L-phenylalanyl-tRNA(Phe) + AMP + diphosphate + H(+). The chain is Phenylalanine--tRNA ligase alpha subunit from Photobacterium profundum (strain SS9).